We begin with the raw amino-acid sequence, 165 residues long: Regulator of sigma D (165 aa).

It belongs to the Rsd/AlgQ family. As to quaternary structure, interacts with RpoD.

Its subcellular location is the cytoplasm. Functionally, binds RpoD and negatively regulates RpoD-mediated transcription activation by preventing the interaction between the primary sigma factor RpoD with the catalytic core of the RNA polymerase and with promoter DNA. May be involved in replacement of the RNA polymerase sigma subunit from RpoD to RpoS during the transition from exponential growth to the stationary phase. This Enterobacter sp. (strain 638) protein is Regulator of sigma D.